A 147-amino-acid chain; its full sequence is Mucoricin (147 aa).

A Ricin B-type lectin domain is found at 4-143 (EEGRLFFIKS…VSANQRWELV (140 aa)).

The protein belongs to the ribosome-inactivating protein family. Type 1 RIP subfamily.

The protein localises to the secreted. It carries out the reaction Endohydrolysis of the N-glycosidic bond at one specific adenosine on the 28S rRNA.. Its function is as follows. N-glycosylase that inhibits protein synthesis in the host by depurinating ribosomal rRNA, and thus acts as a ribosomal inactivating protein (RIP). Promotes vascular permeability in the host and induces necrosis and apoptosis of host alveolar epithelial cells. This Rhizopus delemar (strain RA 99-880 / ATCC MYA-4621 / FGSC 9543 / NRRL 43880) (Mucormycosis agent) protein is Mucoricin.